A 345-amino-acid chain; its full sequence is Dihydroorotate dehydrogenase (quinone) (345 aa).

Residues 65 to 69 and Thr-89 each bind FMN; that span reads AGLDK. Lys-69 is a substrate binding site. Substrate is bound at residue 114–118; sequence NRMGF. 2 residues coordinate FMN: Asn-142 and Asn-175. Substrate is bound at residue Asn-175. The Nucleophile role is filled by Ser-178. Asn-180 contributes to the substrate binding site. Lys-220 and Thr-248 together coordinate FMN. 249–250 lines the substrate pocket; the sequence is NT. FMN-binding positions include Gly-271, Gly-300, and 321–322; that span reads YT.

This sequence belongs to the dihydroorotate dehydrogenase family. Type 2 subfamily. Monomer. The cofactor is FMN.

It localises to the cell membrane. The catalysed reaction is (S)-dihydroorotate + a quinone = orotate + a quinol. The protein operates within pyrimidine metabolism; UMP biosynthesis via de novo pathway; orotate from (S)-dihydroorotate (quinone route): step 1/1. Catalyzes the conversion of dihydroorotate to orotate with quinone as electron acceptor. The sequence is that of Dihydroorotate dehydrogenase (quinone) from Burkholderia multivorans (strain ATCC 17616 / 249).